Consider the following 123-residue polypeptide: Small ribosomal subunit protein uS12c (123 aa).

The span at 1–20 (MPTIQQLIRNTRQPTQNRTK) shows a compositional bias: polar residues. Positions 1–27 (MPTIQQLIRNTRQPTQNRTKSPALKAC) are disordered.

This sequence belongs to the universal ribosomal protein uS12 family. As to quaternary structure, part of the 30S ribosomal subunit.

It is found in the plastid. The protein resides in the chloroplast. Functionally, with S4 and S5 plays an important role in translational accuracy. Located at the interface of the 30S and 50S subunits. This Zygnema circumcarinatum (Green alga) protein is Small ribosomal subunit protein uS12c (rps12).